The primary structure comprises 648 residues: DNA ligase (648 aa).

NAD(+) contacts are provided by residues 30 to 34 (DEEYD), 79 to 80 (SM), and Glu-108. The N6-AMP-lysine intermediate role is filled by Lys-110. NAD(+)-binding residues include Arg-131, Glu-165, Lys-280, and Lys-304. Zn(2+)-binding residues include Cys-398, Cys-401, Cys-414, and Cys-419. The BRCT domain maps to 573 to 648 (AKENPFKGKI…LTEDEMRAML (76 aa)).

Belongs to the NAD-dependent DNA ligase family. LigA subfamily. The cofactor is Mg(2+). Requires Mn(2+) as cofactor.

The catalysed reaction is NAD(+) + (deoxyribonucleotide)n-3'-hydroxyl + 5'-phospho-(deoxyribonucleotide)m = (deoxyribonucleotide)n+m + AMP + beta-nicotinamide D-nucleotide.. DNA ligase that catalyzes the formation of phosphodiester linkages between 5'-phosphoryl and 3'-hydroxyl groups in double-stranded DNA using NAD as a coenzyme and as the energy source for the reaction. It is essential for DNA replication and repair of damaged DNA. The chain is DNA ligase from Sulfurovum sp. (strain NBC37-1).